We begin with the raw amino-acid sequence, 443 residues long: MQQLAELYPQHISELQSRTKEALSREGIDGLIIHSGQAKRMFLDDNNYPFKCNPQFKAWLPVIDNPNCWLIVNGSDKPKLIFYRPKDFWHKVPPEPNDFWVEQFDVVLLTQADAVEKHLPYDRSRFAYIGEYIEVAKALGFDLVNPDRVLNYLHYQRAYKTDYELVCMRQANALAVAGHNAAAAAFKAGKSEFDINQAYLAAVRQSDNQVPYNNIVALNENSAILHYMEQDVVAPSESRSFLIDAGASFHGYAADITRTYCNGSIPNSSHFAELINGMHQVTLSLADSLKPGVPYSDIHIAAHAQVAQLLHQFDIVNLSPDDILAEQIVSTFFPHGIGHFLGLQVHDVAGHVADDRGTPNPPPAEHPFLRTTRMIEARQVFTIEPGLYFIDSLLADLKSTEKSKFINWDVVDTFRPFGGIRIEDNIIVHRDKNENMTRDLGLN.

Mn(2+)-binding residues include D244, D255, H339, E384, and E423.

It belongs to the peptidase M24B family. Bacterial-type prolidase subfamily. Requires Mn(2+) as cofactor.

The catalysed reaction is Xaa-L-Pro dipeptide + H2O = an L-alpha-amino acid + L-proline. Splits dipeptides with a prolyl residue in the C-terminal position. The protein is Xaa-Pro dipeptidase of Pseudoalteromonas atlantica (strain T6c / ATCC BAA-1087).